The following is a 167-amino-acid chain: NAD(P)H-quinone oxidoreductase subunit I, chloroplastic (167 aa).

4Fe-4S ferredoxin-type domains follow at residues G55 to K84 and L95 to E124. The [4Fe-4S] cluster site is built by C64, C67, C70, C74, C104, C107, C110, and C114.

The protein belongs to the complex I 23 kDa subunit family. In terms of assembly, NDH is composed of at least 16 different subunits, 5 of which are encoded in the nucleus. [4Fe-4S] cluster is required as a cofactor.

The protein resides in the plastid. It is found in the chloroplast thylakoid membrane. The enzyme catalyses a plastoquinone + NADH + (n+1) H(+)(in) = a plastoquinol + NAD(+) + n H(+)(out). It catalyses the reaction a plastoquinone + NADPH + (n+1) H(+)(in) = a plastoquinol + NADP(+) + n H(+)(out). NDH shuttles electrons from NAD(P)H:plastoquinone, via FMN and iron-sulfur (Fe-S) centers, to quinones in the photosynthetic chain and possibly in a chloroplast respiratory chain. The immediate electron acceptor for the enzyme in this species is believed to be plastoquinone. Couples the redox reaction to proton translocation, and thus conserves the redox energy in a proton gradient. The chain is NAD(P)H-quinone oxidoreductase subunit I, chloroplastic from Solanum tuberosum (Potato).